We begin with the raw amino-acid sequence, 304 residues long: CRISPR-associated endonuclease Cas1 (304 aa).

Residues E148, H204, and E219 each contribute to the Mn(2+) site.

The protein belongs to the CRISPR-associated endonuclease Cas1 family. As to quaternary structure, homodimer, forms a heterotetramer with a Cas2 homodimer. Requires Mg(2+) as cofactor. Mn(2+) serves as cofactor.

Its function is as follows. CRISPR (clustered regularly interspaced short palindromic repeat), is an adaptive immune system that provides protection against mobile genetic elements (viruses, transposable elements and conjugative plasmids). CRISPR clusters contain spacers, sequences complementary to antecedent mobile elements, and target invading nucleic acids. CRISPR clusters are transcribed and processed into CRISPR RNA (crRNA). Acts as a dsDNA endonuclease. Involved in the integration of spacer DNA into the CRISPR cassette. The protein is CRISPR-associated endonuclease Cas1 of Neisseria meningitidis serogroup C (strain 8013).